We begin with the raw amino-acid sequence, 304 residues long: Recombination-associated protein RdgC (304 aa).

It belongs to the RdgC family.

Its subcellular location is the cytoplasm. It is found in the nucleoid. Functionally, may be involved in recombination. The polypeptide is Recombination-associated protein RdgC (Paraburkholderia phymatum (strain DSM 17167 / CIP 108236 / LMG 21445 / STM815) (Burkholderia phymatum)).